Here is a 928-residue protein sequence, read N- to C-terminus: Probable outer membrane protein pmp11 (928 aa).

The signal sequence occupies residues 1 to 24 (MKTSIPWVLVSSVLAFSCHLQSLA). The 302-residue stretch at 627–928 (GMEHKQGFWV…NVDVGTKLRF (302 aa)) folds into the Autotransporter domain.

It belongs to the PMP outer membrane protein family.

Its subcellular location is the secreted. It localises to the cell wall. The protein localises to the cell outer membrane. The protein is Probable outer membrane protein pmp11 (pmp11) of Chlamydia pneumoniae (Chlamydophila pneumoniae).